We begin with the raw amino-acid sequence, 512 residues long: ATP synthase subunit alpha (512 aa).

169–176 (GDRQTGKT) provides a ligand contact to ATP.

This sequence belongs to the ATPase alpha/beta chains family. F-type ATPases have 2 components, CF(1) - the catalytic core - and CF(0) - the membrane proton channel. CF(1) has five subunits: alpha(3), beta(3), gamma(1), delta(1), epsilon(1). CF(0) has three main subunits: a(1), b(2) and c(9-12). The alpha and beta chains form an alternating ring which encloses part of the gamma chain. CF(1) is attached to CF(0) by a central stalk formed by the gamma and epsilon chains, while a peripheral stalk is formed by the delta and b chains.

It localises to the cell inner membrane. The enzyme catalyses ATP + H2O + 4 H(+)(in) = ADP + phosphate + 5 H(+)(out). Functionally, produces ATP from ADP in the presence of a proton gradient across the membrane. The alpha chain is a regulatory subunit. The polypeptide is ATP synthase subunit alpha (Leptothrix cholodnii (strain ATCC 51168 / LMG 8142 / SP-6) (Leptothrix discophora (strain SP-6))).